Reading from the N-terminus, the 630-residue chain is Putative polypeptide N-acetylgalactosaminyltransferase 10 (630 aa).

At 1-6 (MNVDLR) the chain is on the cytoplasmic side. Residues 7-26 (LIVRLLLAILLTSLVTTILM) form a helical; Signal-anchor for type II membrane protein membrane-spanning segment. Residues 27–630 (GKQIHRRLVK…APYDPQREPH (604 aa)) lie on the Lumenal side of the membrane. N-linked (GlcNAc...) asparagine glycosylation is found at Asn72, Asn84, Asn146, and Asn168. 3 disulfides stabilise this stretch: Cys157–Cys386, Cys377–Cys456, and Cys496–Cys513. The tract at residues 166–277 (LPNVTVIIAF…TNWLPPLLEP (112 aa)) is catalytic subdomain A. Positions 207 and 238 each coordinate substrate. Asp261 is a binding site for Mn(2+). Ser262 provides a ligand contact to substrate. Residue His263 participates in Mn(2+) binding. Positions 333-394 (PYRTPVLSGA…PCARVGHIGK (62 aa)) are catalytic subdomain B. Substrate is bound at residue Trp363. His391 serves as a coordination point for Mn(2+). Positions 483 to 618 (FSGVIESVAF…NQLEQQWKVG (136 aa)) constitute a Ricin B-type lectin domain. Asn525 is a glycosylation site (N-linked (GlcNAc...) asparagine). Intrachain disulfides connect Cys543–Cys559 and Cys586–Cys606.

The protein belongs to the glycosyltransferase 2 family. GalNAc-T subfamily. Mn(2+) is required as a cofactor. In terms of tissue distribution, during embryonic stages 9-11, weakly expressed in the mesoderm. During embryonic stages 12-13, very weak expression is observed in the somatic mesoderm region. No expression detected from stage 14-15. During embryonic stages 16-17, expressed in the epidermis and the antennomaxillary complex. In third instar larvae, expressed ubiquitously in wing, eye-antennal, leg and haltere imaginal disks.

It localises to the golgi apparatus membrane. It catalyses the reaction L-seryl-[protein] + UDP-N-acetyl-alpha-D-galactosamine = a 3-O-[N-acetyl-alpha-D-galactosaminyl]-L-seryl-[protein] + UDP + H(+). The catalysed reaction is L-threonyl-[protein] + UDP-N-acetyl-alpha-D-galactosamine = a 3-O-[N-acetyl-alpha-D-galactosaminyl]-L-threonyl-[protein] + UDP + H(+). Its pathway is protein modification; protein glycosylation. In terms of biological role, may catalyze the initial reaction in O-linked oligosaccharide biosynthesis, the transfer of an N-acetyl-D-galactosamine residue to a serine or threonine residue on the protein receptor. The protein is Putative polypeptide N-acetylgalactosaminyltransferase 10 (pgant10) of Drosophila melanogaster (Fruit fly).